The primary structure comprises 197 residues: FMN-dependent NADH:quinone oxidoreductase (197 aa).

Residues serine 10, serine 16–serine 18, methionine 93–phenylalanine 96, and threonine 137–glycine 140 each bind FMN.

The protein belongs to the azoreductase type 1 family. As to quaternary structure, homodimer. It depends on FMN as a cofactor.

It catalyses the reaction 2 a quinone + NADH + H(+) = 2 a 1,4-benzosemiquinone + NAD(+). The enzyme catalyses N,N-dimethyl-1,4-phenylenediamine + anthranilate + 2 NAD(+) = 2-(4-dimethylaminophenyl)diazenylbenzoate + 2 NADH + 2 H(+). In terms of biological role, quinone reductase that provides resistance to thiol-specific stress caused by electrophilic quinones. Also exhibits azoreductase activity. Catalyzes the reductive cleavage of the azo bond in aromatic azo compounds to the corresponding amines. The chain is FMN-dependent NADH:quinone oxidoreductase from Shewanella loihica (strain ATCC BAA-1088 / PV-4).